A 237-amino-acid polypeptide reads, in one-letter code: Uridylate kinase (237 aa).

Residue 12–15 (KLSG) coordinates ATP. The involved in allosteric activation by GTP stretch occupies residues 20–25 (GEDGLG). Glycine 54 is a binding site for UMP. 2 residues coordinate ATP: glycine 55 and arginine 59. UMP-binding positions include aspartate 74 and 135–142 (TGNPFFTT). The ATP site is built by threonine 162, tyrosine 168, and aspartate 171.

Belongs to the UMP kinase family. Homohexamer.

The protein localises to the cytoplasm. The enzyme catalyses UMP + ATP = UDP + ADP. The protein operates within pyrimidine metabolism; CTP biosynthesis via de novo pathway; UDP from UMP (UMPK route): step 1/1. With respect to regulation, allosterically activated by GTP. Inhibited by UTP. In terms of biological role, catalyzes the reversible phosphorylation of UMP to UDP. In Haemophilus influenzae (strain ATCC 51907 / DSM 11121 / KW20 / Rd), this protein is Uridylate kinase (pyrH).